A 31-amino-acid chain; its full sequence is MAAAALRQIWARKFLPVPWLLCGPRRYASSS.

The N-terminal 27 residues, 1 to 27 (MAAAALRQIWARKFLPVPWLLCGPRRY), are a transit peptide targeting the mitochondrion.

The protein belongs to the class-IV pyridoxal-phosphate-dependent aminotransferase family. As to quaternary structure, homodimer. Pyridoxal 5'-phosphate serves as cofactor.

The protein resides in the mitochondrion. It carries out the reaction L-leucine + 2-oxoglutarate = 4-methyl-2-oxopentanoate + L-glutamate. It catalyses the reaction L-isoleucine + 2-oxoglutarate = (S)-3-methyl-2-oxopentanoate + L-glutamate. The catalysed reaction is L-valine + 2-oxoglutarate = 3-methyl-2-oxobutanoate + L-glutamate. Its function is as follows. Catalyzes the first reaction in the catabolism of the essential branched chain amino acids leucine, isoleucine, and valine. May also function as a transporter of branched chain alpha-keto acids. This is Branched-chain-amino-acid aminotransferase, mitochondrial (BCAT2) from Sus scrofa (Pig).